The chain runs to 268 residues: Undecaprenyl-diphosphatase (268 aa).

7 consecutive transmembrane segments (helical) span residues 42 to 62 (VPGK…ICVL), 86 to 106 (AIFV…DFIL), 108 to 128 (VLFT…AIVV), 158 to 178 (IALV…LLVG), 184 to 204 (AAEF…VVSL), 218 to 238 (LIAA…KWLV), and 246 to 266 (FTVF…YFSL).

Belongs to the UppP family.

It localises to the cell inner membrane. It carries out the reaction di-trans,octa-cis-undecaprenyl diphosphate + H2O = di-trans,octa-cis-undecaprenyl phosphate + phosphate + H(+). Functionally, catalyzes the dephosphorylation of undecaprenyl diphosphate (UPP). Confers resistance to bacitracin. The sequence is that of Undecaprenyl-diphosphatase from Parvibaculum lavamentivorans (strain DS-1 / DSM 13023 / NCIMB 13966).